We begin with the raw amino-acid sequence, 506 residues long: Carboxyl-terminal PDZ ligand of neuronal nitric oxide synthase protein (506 aa).

The region spanning 26 to 196 is the PID domain; it reads FQHGICFEAK…ESERNSNSSG (171 aa). Disordered regions lie at residues 175–224 and 241–260; these read HTQQ…VEVP and DAVGKEGGSHTGSKVSHPQE. A phosphoserine mark is found at serine 188, serine 192, and serine 195. Over residues 203 to 213 the composition is skewed to low complexity; it reads TGAERASTATA. Residue serine 266 is modified to Phosphoserine. Positions 322–363 form a coiled coil; that stretch reads AAEAAARLEAQARVHQLLLQNKDMLQHISLLVKQVQELELKL. Residues serine 371, serine 374, serine 401, and serine 417 each carry the phosphoserine modification. The interval 494–506 is interaction with NOS1; that stretch reads QELGDGLDDEIAV. The short motif at 504–506 is the PDZ-binding element; sequence IAV.

As to quaternary structure, interacts with the PDZ domain of NOS1 or the second PDZ domain of DLG4 through its C-terminus. Interacts with RASD1 and SYN1, SYN2 and SYN3 via its PID domain. Forms a ternary complex with NOS1 and RASD1. Forms a ternary complex with NOS1 and SYN1. Expressed in kidney glomeruli podocytes.

Its subcellular location is the cell projection. The protein localises to the filopodium. It localises to the podosome. Adapter protein involved in neuronal nitric-oxide (NO) synthesis regulation via its association with nNOS/NOS1. The complex formed with NOS1 and synapsins is necessary for specific NO and synapsin functions at a presynaptic level. Mediates an indirect interaction between NOS1 and RASD1 leading to enhance the ability of NOS1 to activate RASD1. Competes with DLG4 for interaction with NOS1, possibly affecting NOS1 activity by regulating the interaction between NOS1 and DLG4. In kidney podocytes, plays a role in podosomes and filopodia formation through CDC42 activation. The sequence is that of Carboxyl-terminal PDZ ligand of neuronal nitric oxide synthase protein from Homo sapiens (Human).